The primary structure comprises 220 residues: Translation initiation factor 6 (220 aa).

This sequence belongs to the eIF-6 family.

Binds to the 50S ribosomal subunit and prevents its association with the 30S ribosomal subunit to form the 70S initiation complex. In Pyrobaculum aerophilum (strain ATCC 51768 / DSM 7523 / JCM 9630 / CIP 104966 / NBRC 100827 / IM2), this protein is Translation initiation factor 6.